A 791-amino-acid chain; its full sequence is Phenylalanine--tRNA ligase beta subunit (791 aa).

Residues 39–149 (GDEIQNVVTG…SDTAIGKDIK (111 aa)) enclose the tRNA-binding domain. The B5 domain occupies 403-478 (IKERNLKVDS…RIYGYNNIPT (76 aa)). Mg(2+)-binding residues include Asp-456, Asp-462, Glu-465, and Glu-466. Residues 698–791 (PKFPAVDRDM…LENNLGAELR (94 aa)) form the FDX-ACB domain.

The protein belongs to the phenylalanyl-tRNA synthetase beta subunit family. Type 1 subfamily. Tetramer of two alpha and two beta subunits. Requires Mg(2+) as cofactor.

Its subcellular location is the cytoplasm. It catalyses the reaction tRNA(Phe) + L-phenylalanine + ATP = L-phenylalanyl-tRNA(Phe) + AMP + diphosphate + H(+). The chain is Phenylalanine--tRNA ligase beta subunit from Clostridium tetani (strain Massachusetts / E88).